The following is a 215-amino-acid chain: Mediator of RNA polymerase II transcription subunit 18 (215 aa).

It belongs to the Mediator complex subunit 18 family. Component of the Mediator complex.

The protein localises to the nucleus. Component of the Mediator complex, a coactivator involved in the regulated transcription of nearly all RNA polymerase II-dependent genes. Mediator functions as a bridge to convey information from gene-specific regulatory proteins to the basal RNA polymerase II transcription machinery. Mediator is recruited to promoters by direct interactions with regulatory proteins and serves as a scaffold for the assembly of a functional preinitiation complex with RNA polymerase II and the general transcription factors. In Aedes aegypti (Yellowfever mosquito), this protein is Mediator of RNA polymerase II transcription subunit 18 (MED18).